The primary structure comprises 293 residues: Pyridoxal 5'-phosphate synthase subunit PdxS (293 aa).

Asp-23 lines the D-ribose 5-phosphate pocket. The active-site Schiff-base intermediate with D-ribose 5-phosphate is the Lys-80. Gly-152 contributes to the D-ribose 5-phosphate binding site. Arg-164 serves as a coordination point for D-glyceraldehyde 3-phosphate. Residues Gly-213 and 234-235 (GS) each bind D-ribose 5-phosphate.

The protein belongs to the PdxS/SNZ family. As to quaternary structure, in the presence of PdxT, forms a dodecamer of heterodimers.

It catalyses the reaction aldehydo-D-ribose 5-phosphate + D-glyceraldehyde 3-phosphate + L-glutamine = pyridoxal 5'-phosphate + L-glutamate + phosphate + 3 H2O + H(+). It participates in cofactor biosynthesis; pyridoxal 5'-phosphate biosynthesis. In terms of biological role, catalyzes the formation of pyridoxal 5'-phosphate from ribose 5-phosphate (RBP), glyceraldehyde 3-phosphate (G3P) and ammonia. The ammonia is provided by the PdxT subunit. Can also use ribulose 5-phosphate and dihydroxyacetone phosphate as substrates, resulting from enzyme-catalyzed isomerization of RBP and G3P, respectively. This chain is Pyridoxal 5'-phosphate synthase subunit PdxS, found in Roseiflexus sp. (strain RS-1).